We begin with the raw amino-acid sequence, 805 residues long: Muscarinic acetylcholine receptor DM1 (805 aa).

Over 1-100 (MEPVMSLALA…GFETKGPRYS (100 aa)) the chain is Extracellular. Over residues 27–43 (TSTTTTTTTTTSTTTTT) the composition is skewed to low complexity. The disordered stretch occupies residues 27–47 (TSTTTTTTTTTSTTTTTASPA). Residues N65, N84, and N87 are each glycosylated (N-linked (GlcNAc...) asparagine). Residues 101-121 (LASMVVMGFVAAILSTVTVAG) traverse the membrane as a helical segment. Topologically, residues 122–141 (NVMVMISFKIDKQLQTISNY) are cytoplasmic. A helical transmembrane segment spans residues 142 to 162 (FLFSLAIADFAIGAISMPLFA). Topologically, residues 163–177 (VTTILGYWPLGPIVC) are extracellular. The helical transmembrane segment at 178–198 (DTWLALDYLASNASVLNLLII) threads the bilayer. At 199–220 (SFDRYFSVTRPLTYRAKRTTNR) the chain is on the cytoplasmic side. Residues 221 to 241 (AAVMIGAAWGISLLLWPPWIY) form a helical membrane-spanning segment. At 242–266 (SWPYIEGKRTVPKDECYIQFIETNQ) the chain is on the extracellular side. A helical transmembrane segment spans residues 267–287 (YITFGTALAAFYFPVTIMCFL). The Cytoplasmic segment spans residues 288 to 718 (YWRIWRETKK…KRQESKAAKT (431 aa)). 3 disordered regions span residues 302–322 (LPNL…SDEN), 340–359 (GNDH…DAES), and 507–530 (GNGN…VNGN). Basic and acidic residues-rich tracts occupy residues 308-318 (GKKDSSKRSNS) and 341-353 (NDHD…RSES). Over residues 507–525 (GNGNGAINNNNNASHNGNG) the composition is skewed to low complexity. A helical transmembrane segment spans residues 719–739 (LSAILLSFIITWTPYNILVLI). Residues 740-752 (KPLTTCSDCIPTE) lie on the Extracellular side of the membrane. A helical transmembrane segment spans residues 753-773 (LWDFFYALCYINSTINPMCYA). At 774–805 (LCNATFRRTYVRILTCKWHTRNREGMVRGVYN) the chain is on the cytoplasmic side.

The protein belongs to the G-protein coupled receptor 1 family. Muscarinic acetylcholine receptor subfamily. As to expression, intense staining in the glomeruli of the antennal lobes, the region of the nervous system containing terminals of antennal olfactory sensory neurons and mechanosensory neurons. Also a discrete group of neurosecretory cells in the pars intercerebralis of the brain.

It localises to the cell membrane. The protein resides in the postsynaptic cell membrane. Functionally, the muscarinic acetylcholine receptor mediates various cellular responses, including inhibition of adenylate cyclase, breakdown of phosphoinositides and modulation of potassium channels through the action of G proteins. Primary transducing effect is Pi turnover. May have a role in the processing of olfactory and mechanosensory signals; regulation of neurosecretion. This chain is Muscarinic acetylcholine receptor DM1 (mAChR-A), found in Drosophila melanogaster (Fruit fly).